The primary structure comprises 267 residues: 3-methyl-2-oxobutanoate hydroxymethyltransferase (267 aa).

Positions 46 and 85 each coordinate Mg(2+). 3-methyl-2-oxobutanoate is bound by residues 46 to 47, Asp-85, and Lys-115; that span reads DS. Glu-117 lines the Mg(2+) pocket. Glu-184 acts as the Proton acceptor in catalysis.

It belongs to the PanB family. In terms of assembly, homodecamer; pentamer of dimers. It depends on Mg(2+) as a cofactor.

The protein localises to the cytoplasm. It carries out the reaction 3-methyl-2-oxobutanoate + (6R)-5,10-methylene-5,6,7,8-tetrahydrofolate + H2O = 2-dehydropantoate + (6S)-5,6,7,8-tetrahydrofolate. Its pathway is cofactor biosynthesis; (R)-pantothenate biosynthesis; (R)-pantoate from 3-methyl-2-oxobutanoate: step 1/2. Functionally, catalyzes the reversible reaction in which hydroxymethyl group from 5,10-methylenetetrahydrofolate is transferred onto alpha-ketoisovalerate to form ketopantoate. In Geobacter metallireducens (strain ATCC 53774 / DSM 7210 / GS-15), this protein is 3-methyl-2-oxobutanoate hydroxymethyltransferase.